The sequence spans 345 residues: Lysine-specific demethylase JMJ32 (345 aa).

The JmjC domain maps to 122–315 (GYLQQQNDCF…IKYAYFNFLQ (194 aa)). Fe cation-binding residues include His174, Asp176, and His281.

Belongs to the JARID1 histone demethylase family. The cofactor is Fe(2+). In terms of tissue distribution, expressed ubiquitously including in vasculatures, leaves, siliques, roots and inflorescences. Present in the root meristem. Accumulates in cotyledons and root tips of young seedlings.

The protein resides in the nucleus. Its subcellular location is the cytoplasm. It localises to the endoplasmic reticulum. It carries out the reaction N(6),N(6),N(6)-trimethyl-L-lysyl(27)-[histone H3] + 2-oxoglutarate + O2 = N(6),N(6)-dimethyl-L-lysyl(27)-[histone H3] + formaldehyde + succinate + CO2. It catalyses the reaction N(6),N(6)-dimethyl-L-lysyl(27)-[histone H3] + 2-oxoglutarate + O2 = N(6)-methyl-L-lysyl(27)-[histone H3] + formaldehyde + succinate + CO2. The enzyme catalyses N(6),N(6),N(6)-trimethyl-L-lysyl(27)-[histone H3] + 2 2-oxoglutarate + 2 O2 = N(6)-methyl-L-lysyl(27)-[histone H3] + 2 formaldehyde + 2 succinate + 2 CO2. Histone demethylase that demethylates 'Lys-27' (H3K27me) of histone H3 with a specific activity for H3K27me3 and H3K27me2, and involved in the regulation of gene expression. No activity on H3K27me1. Together with JMJ30, regulates the flowering-repressor FLOWERING LOCUS C (FLC) locus by removing the repressive histone modification H3 lysine 27 trimethylation (H3K27me3), especially at elevated temperatures (e.g. 29 degrees Celsius), thus preventing extreme precocious flowering. JMJ30 and JMJ32 are regulators involved in the integration of abscisic acid (ABA) and brassinosteroids (BR) signaling pathways. Together with JMJ30, controls ABA-mediated growth arrest during the post-germination stage in unfavorable conditions, and responses to ABA during root development, via the removal of repressive histone mark (H3K27me3) from the SnRK2.8 promoter, thus promoting SnRK2.8 expression and subsequent kinase-dependent ABI3 activation. In addition, removes the repressive histone marks (H3K27me3) from the BZR1 locus in response to stress and ABA, thus activating the BR signaling pathway which, in turn, inhibits the ABA signaling pathway. The chain is Lysine-specific demethylase JMJ32 from Arabidopsis thaliana (Mouse-ear cress).